Consider the following 488-residue polypeptide: Photosystem II CP43 reaction center protein (488 aa).

A propeptide spanning residues 1–29 (MTKVFALGWLLKINLMKTLYSLRRFYHVE) is cleaved from the precursor. 5 helical membrane passes run 84–108 (LFEV…PHLA), 149–170 (LIGP…RDKN), 193–215 (KALF…RFVS), 270–290 (KPFA…LSYS), and 306–327 (WYNN…ASQA). Glu-382 contacts [CaMn4O5] cluster. Residues 462 to 486 (RARAAAAGFEKGINRENEPVLSMRP) traverse the membrane as a helical segment.

This sequence belongs to the PsbB/PsbC family. PsbC subfamily. In terms of assembly, PSII is composed of 1 copy each of membrane proteins PsbA, PsbB, PsbC, PsbD, PsbE, PsbF, PsbH, PsbI, PsbJ, PsbK, PsbL, PsbM, PsbT, PsbX, PsbY, PsbZ, Psb30/Ycf12, at least 3 peripheral proteins of the oxygen-evolving complex and a large number of cofactors. It forms dimeric complexes. It depends on Binds multiple chlorophylls and provides some of the ligands for the Ca-4Mn-5O cluster of the oxygen-evolving complex. It may also provide a ligand for a Cl- that is required for oxygen evolution. PSII binds additional chlorophylls, carotenoids and specific lipids. as a cofactor.

The protein resides in the plastid. It localises to the chloroplast thylakoid membrane. Functionally, one of the components of the core complex of photosystem II (PSII). It binds chlorophyll and helps catalyze the primary light-induced photochemical processes of PSII. PSII is a light-driven water:plastoquinone oxidoreductase, using light energy to abstract electrons from H(2)O, generating O(2) and a proton gradient subsequently used for ATP formation. The sequence is that of Photosystem II CP43 reaction center protein from Pyropia yezoensis (Susabi-nori).